The primary structure comprises 751 residues: MAALSGGGGSSSGGGGGGGGGGGGGDGGGGAEQGQALFNGDMEPEAGAGAAASSAADPAIPEEVWNIKQMIKLTQEHIEALLDKFGGEHNPPSIYLEAYEEYTSKLDALQQREQQLLESLVFQTPTDASRNNPKSPQKPIVRVFLPNKQRTVVPARCGVTVRDSLKKALMMRGLIPECCAVYRIQDGEKKPIGWDTDISWLTGEELHVEVLENVPLTTHNFVRKTFFTLAFCDFCRKLLFQGFRCQTCGYKFHQRCSTEVPLMCVNYDQLDLLFVSKFFEHHPVPQEEASFPETALPSGSSSAPPSDSTGPQILTSPSPSKSIPIPQPFRPADEDHRNQFGQRDRSSSAPNVHINTIEPVNIDDLIRDQGFRGDGGSTTGLSATPPASLPGSLTNVKALQKSPGPQRERKSSSSSSSEDRSRMKTLGRRDSSDDWEIPDGQITVGQRIGSGSFGTVYKGKWHGDVAVKMLNVTAPTPQQLQAFKNEVGVLRKTRHVNILLFMGYSTKPQLAIVTQWCEGSSLYHHLHIIETKFEMIKLIDIARQTAQGMDYLHAKSIIHRDLKSNNIFLHEDLTVKIGDFGLATVKSRWSGSHQFEQLSGSILWMAPEVIRMQDKNPYSFQSDVYAFGIVLYELMTGQLPYSNINNRDQIIFMVGRGYLSPDLSKVRSNCPKAMKRLMAECLKKKRDERPLFPQILASIELLARSLPKIHRSASEPSLNRAGFQTEDFSLYACASPKTPIQAGGYGGFPVH.

A compositionally biased stretch (gly residues) spans 1-32; the sequence is MAALSGGGGSSSGGGGGGGGGGGGGDGGGGAE. The tract at residues 1-55 is disordered; it reads MAALSGGGGSSSGGGGGGGGGGGGGDGGGGAEQGQALFNGDMEPEAGAGAAASSA. A2 carries the post-translational modification N-acetylalanine. Over residues 46–55 the composition is skewed to low complexity; it reads AGAGAAASSA. S135 carries the post-translational modification Phosphoserine. The 73-residue stretch at 139 to 211 folds into the RBD domain; it reads PIVRVFLPNK…TGEELHVEVL (73 aa). Zn(2+)-binding residues include H219, C232, C235, C245, C248, H253, C256, and C264. The interval 288–440 is disordered; it reads EASFPETALP…SSDDWEIPDG (153 aa). The span at 297-324 shows a compositional bias: low complexity; it reads PSGSSSAPPSDSTGPQILTSPSPSKSIP. The residue at position 316 (S316) is a Phosphoserine. A compositionally biased stretch (basic and acidic residues) spans 331-346; sequence PADEDHRNQFGQRDRS. Residue S348 is modified to Phosphoserine. T356 carries the post-translational modification Phosphothreonine; by autocatalysis. Phosphothreonine is present on T379. The residue at position 382 (S382) is a Phosphoserine. Residue T384 is modified to Phosphothreonine. Positions 406–432 are enriched in basic and acidic residues; sequence QRERKSSSSSSSEDRSRMKTLGRRDSS. Residues S431 and S432 each carry the phosphoserine modification. The Protein kinase domain occupies 442–702; it reads ITVGQRIGSG…PQILASIELL (261 aa). Residues 448-456 and K468 each bind ATP; that span reads IGSGSFGTV. Catalysis depends on D561, which acts as the Proton acceptor. A Glycyl lysine isopeptide (Lys-Gly) (interchain with G-Cter in ubiquitin) cross-link involves residue K563. R656 carries the post-translational modification Omega-N-methylarginine; by PRMT5. Phosphoserine is present on residues S714 and S735. A Phosphothreonine; by MAPK1 modification is found at T738.

It belongs to the protein kinase superfamily. TKL Ser/Thr protein kinase family. RAF subfamily. Monomer. Homodimer. Heterodimerizes with RAF1, and the heterodimer possesses a highly increased kinase activity compared to the respective homodimers or monomers. Heterodimerization is mitogen-regulated and enhanced by 14-3-3 proteins. MAPK1/ERK2 activation can induce a negative feedback that promotes the dissociation of the heterodimer by phosphorylating BRAF at Thr-738. Heterodimerizes (via N-terminus) with KSR1 (via N-terminus) or KSR2 (via N-terminus) in a MAP2K1-dependent manner. Interacts with MAP2K1 and MAP2K2. Found in a complex with at least BRAF, HRAS, MAP2K1, MAPK3 and RGS14. Interacts with RIT1. Interacts (via N-terminus) with RGS14 (via RBD domains); the interaction mediates the formation of a ternary complex with RAF1, a ternary complex inhibited by GNAI1. Interacts with DGKH. Interacts with PRMT5. Interacts with AKAP13, MAP2K1 and KSR1. Identified in a complex with AKAP13, KSR1 and MAP2K1. Interacts with FNIP1 and FNIP2. Requires Zn(2+) as cofactor. In terms of processing, phosphorylation at Ser-348 by SGK1 inhibits its activity. Dephosphorylation of Ser-348 by the SHOC2-MRAS-PP1c (SMP) complex consisting of SHOC2, GTP-bound M-Ras/MRAS and the catalytic subunit of protein phosphatase 1 (PPP1CA, PPP1CB or PPP1CC); this relieves inactivation and stimulates kinase activity. Methylation by PRMT5 decreases stability and kinase activity. Post-translationally, ubiquitinated by RNF149; which leads to proteasomal degradation. Polyubiquitinated at Lys-615 in response to EGF.

It is found in the nucleus. It localises to the cytoplasm. Its subcellular location is the cell membrane. The catalysed reaction is L-seryl-[protein] + ATP = O-phospho-L-seryl-[protein] + ADP + H(+). It carries out the reaction L-threonyl-[protein] + ATP = O-phospho-L-threonyl-[protein] + ADP + H(+). With respect to regulation, in quiescent cells, maintained in an inactive state via an intramolecular interaction between the protein kinase and N-terminal domains. Following mitogen-mediated cell activation, binds via its RGB domain to active HRAS (GTP-bound) which releases the inhibitory intramolecular interaction between the two domains. This allows the MAP2K1-mediated dimerization of KSR1 or KSR2, and BRAF which activates BRAF. In terms of biological role, involved in the transduction of mitogenic signals from the cell membrane to the nucleus. Phosphorylates MAP2K1, and thereby activates the MAP kinase signal transduction pathway. Phosphorylates PFKFB2. May play a role in the postsynaptic responses of hippocampal neurons. In Mus musculus (Mouse), this protein is Serine/threonine-protein kinase B-raf.